The following is a 326-amino-acid chain: Porin-like protein H (326 aa).

The first 19 residues, 1–19, serve as a signal peptide directing secretion; that stretch reads MKKTLVALAILTAAGSANA.

The protein belongs to the Gram-negative porin family. In terms of assembly, oligomer.

It localises to the cell outer membrane. Forms pores that allow passive diffusion of small molecules across the outer membrane. The sequence is that of Porin-like protein H (ompH) from Photobacterium profundum (strain SS9).